Reading from the N-terminus, the 326-residue chain is Ig gamma-1 chain C region (326 aa).

The tract at residues 1-97 is CH1; sequence AETTAPSVYP…ASSTKVDKKI (97 aa). Cysteine 27 and cysteine 82 are disulfide-bonded. Residues 98 to 112 form a hinge region; sequence VPRNCGGDCKPCICT. Residues 113–219 form a CH2 region; it reads GSEVSSVFIF…PIEKTISKPE (107 aa). 2 disulfides stabilise this stretch: cysteine 140-cysteine 200 and cysteine 246-cysteine 304. Residue asparagine 176 is glycosylated (N-linked (GlcNAc...) asparagine). Residues 220–326 are CH3; sequence GRTQVPHVYT…EKSLSHSPGK (107 aa).

This chain is Ig gamma-1 chain C region, found in Rattus norvegicus (Rat).